A 377-amino-acid polypeptide reads, in one-letter code: Nitric oxide reductase FlRd-NAD(+) reductase (377 aa).

The protein belongs to the FAD-dependent oxidoreductase family. FAD is required as a cofactor.

The protein resides in the cytoplasm. It catalyses the reaction 2 reduced [nitric oxide reductase rubredoxin domain] + NAD(+) + H(+) = 2 oxidized [nitric oxide reductase rubredoxin domain] + NADH. It participates in nitrogen metabolism; nitric oxide reduction. One of at least two accessory proteins for anaerobic nitric oxide (NO) reductase. Reduces the rubredoxin moiety of NO reductase. The chain is Nitric oxide reductase FlRd-NAD(+) reductase from Salmonella newport (strain SL254).